The primary structure comprises 102 residues: NADH-quinone oxidoreductase subunit K (102 aa).

Helical transmembrane passes span 5 to 25 (LGHF…GIFL), 31 to 51 (IVLL…FVAF), and 62 to 82 (IFVF…LAIL).

It belongs to the complex I subunit 4L family. NDH-1 is composed of 14 different subunits. Subunits NuoA, H, J, K, L, M, N constitute the membrane sector of the complex.

Its subcellular location is the cell inner membrane. The catalysed reaction is a quinone + NADH + 5 H(+)(in) = a quinol + NAD(+) + 4 H(+)(out). Functionally, NDH-1 shuttles electrons from NADH, via FMN and iron-sulfur (Fe-S) centers, to quinones in the respiratory chain. The immediate electron acceptor for the enzyme in this species is believed to be ubiquinone. Couples the redox reaction to proton translocation (for every two electrons transferred, four hydrogen ions are translocated across the cytoplasmic membrane), and thus conserves the redox energy in a proton gradient. The chain is NADH-quinone oxidoreductase subunit K from Albidiferax ferrireducens (strain ATCC BAA-621 / DSM 15236 / T118) (Rhodoferax ferrireducens).